The sequence spans 112 residues: Conotoxin vil14.5 (112 aa).

An N-terminal signal peptide occupies residues 1–22; that stretch reads MGFRVLVLVVMATTSALPFTFS. The propeptide occupies 23-85; the sequence is EEPGRSPFRP…FAELSVGQRR (63 aa). A disordered region spans residues 53–74; it reads RADGQPPDMRQPEMRRPEVRQP. Positions 62-74 are enriched in basic and acidic residues; it reads RQPEMRRPEVRQP. Cystine bridges form between Cys91-Cys111 and Cys95-Cys107.

The protein belongs to the conotoxin R superfamily. Expressed by the venom duct.

The protein localises to the secreted. This is Conotoxin vil14.5 from Conus villepinii (Villepin's cone).